We begin with the raw amino-acid sequence, 617 residues long: Sodium-dependent noradrenaline transporter (617 aa).

Residues 1 to 23 (MLLARMNPQVQPENNGADTGPEQ) form a disordered region. At 1–62 (MLLARMNPQV…AQPRETWGKK (62 aa)) the chain is on the cytoplasmic side. Residues 8 to 17 (PQVQPENNGA) are compositionally biased toward polar residues. The helical transmembrane segment at 63-88 (IDFLLSVVGFAVDLANVWRFPYLCYK) threads the bilayer. Positions 71, 73, and 74 each coordinate Na(+). Asp-75 serves as a coordination point for (R)-noradrenaline. A dopamine-binding site is contributed by Asp-75. Position 78 (Asn-78) interacts with Na(+). Positions 87 and 88 each coordinate (R)-noradrenaline. Residues 89–92 (NGGG) lie on the Extracellular side of the membrane. The chain crosses the membrane as a helical span at residues 93–116 (AFLIPYTLFLIIAGMPLFYMELAL). The Cytoplasmic portion of the chain corresponds to 117-135 (GQYNREGAATVWKICPFFK). Residues 136–166 (GVGYAVILIALYVGFYYNVIIAWSLYYLFSS) traverse the membrane as a helical segment. The (R)-noradrenaline site is built by Ala-145 and Gly-149. Ala-145 lines the dopamine pocket. Residues 167–233 (FTLNLPWTDC…SSGIHDIGLP (67 aa)) are Extracellular-facing. An intrachain disulfide couples Cys-176 to Cys-185. Residues Asn-184, Asn-192, and Asn-198 are each glycosylated (N-linked (GlcNAc...) asparagine). The helical transmembrane segment at 234-254 (QWQLLLCLMVVVIVLYFSLWK) threads the bilayer. The Cytoplasmic segment spans residues 255 to 257 (GVK). Residues 258–282 (TSGKVVWITATLPYFVLFVLLVHGV) form a helical membrane-spanning segment. At 283–306 (TLPGASNGINAYLHIDFYRLKEAT) the chain is on the extracellular side. A helical transmembrane segment spans residues 307 to 332 (VWIDAATQIFFSLGAGFGVLIAFASY). Phe-317 lines the (R)-noradrenaline pocket. Residue Phe-317 coordinates dopamine. Ser-318 provides a ligand contact to Na(+). The Cytoplasmic segment spans residues 333 to 338 (NKFDNN). A helical membrane pass occupies residues 339–362 (CYRDALLTSSINCITSFVSGFAIF). Asn-350 provides a ligand contact to Na(+). Residues 363–402 (SILGYMAHEHKVNIEDVATEGAGLVFILYPEAISTLSGST) are Extracellular-facing. Glu-382 is a (R)-noradrenaline binding site. Glu-382 serves as a coordination point for dopamine. The chain crosses the membrane as a helical span at residues 403 to 428 (FWAVVFFVMLLALGLDSSMGGMEAVI). Na(+) is bound by residues Asp-418 and Ser-419. Over 429–443 (TGLADDFQVLKRHRK) the chain is Cytoplasmic. Residues 444-464 (LFTFGVTFSTFLLALFCITKG) traverse the membrane as a helical segment. Position 465 (Gly-465) is a topological domain, extracellular. The helical transmembrane segment at 466–492 (IYVLTLLDTFAAGTSILFAVLMEAIGV) threads the bilayer. Over 493–522 (SWFYGVDRFSNDIQQMMGFRPGLYWRLCWK) the chain is Cytoplasmic. Residues 523-545 (FVSPAFLLFVVVVSIINFKPLTY) form a helical membrane-spanning segment. Residues 546–548 (DDY) lie on the Extracellular side of the membrane. A helical membrane pass occupies residues 549 to 569 (IFPPWANWVGWGIALSSMVLV). Residues 570–617 (PIYVIYKFLSTQGSLWERLAYGITPENEHHLVAQRDIRQFQLQHWLAI) are Cytoplasmic-facing.

It belongs to the sodium:neurotransmitter symporter (SNF) (TC 2.A.22) family. SLC6A2 subfamily. In terms of assembly, monomer. Can form homodimers in the cell membrane; homodimerization is mostly mediated by cholesterol and lipids, and regulates neurotransmitter transport activity. Interacts with PRKCABP. Post-translationally, palmitoylated; palmitoylation regulates protein levels and neurotransmitter transport.

The protein localises to the cell membrane. Its subcellular location is the cell projection. It localises to the axon. The protein resides in the synapse. It is found in the synaptosome. It catalyses the reaction (R)-noradrenaline(out) + chloride(out) + Na(+)(out) = (R)-noradrenaline(in) + chloride(in) + Na(+)(in). The enzyme catalyses dopamine(out) + chloride(out) + Na(+)(out) = dopamine(in) + chloride(in) + Na(+)(in). It carries out the reaction dopamine(out) + chloride(out) + 2 Na(+)(out) = dopamine(in) + chloride(in) + 2 Na(+)(in). Inhibited by mazindol, desipramine, nomifensine and nortriptyline. Its function is as follows. Mediates sodium- and chloride-dependent transport of norepinephrine (also known as noradrenaline), the primary signaling neurotransmitter in the autonomic sympathetic nervous system. Is responsible for norepinephrine re-uptake and clearance from the synaptic cleft, thus playing a crucial role in norepinephrine inactivation and homeostasis. Can also mediate sodium- and chloride-dependent transport of dopamine. The chain is Sodium-dependent noradrenaline transporter from Homo sapiens (Human).